Consider the following 434-residue polypeptide: Methylenetetrahydrofolate--tRNA-(uracil-5-)-methyltransferase TrmFO (434 aa).

Residue 10-15 (GAGLAG) coordinates FAD.

The protein belongs to the MnmG family. TrmFO subfamily. FAD is required as a cofactor.

The protein localises to the cytoplasm. It carries out the reaction uridine(54) in tRNA + (6R)-5,10-methylene-5,6,7,8-tetrahydrofolate + NADH + H(+) = 5-methyluridine(54) in tRNA + (6S)-5,6,7,8-tetrahydrofolate + NAD(+). The enzyme catalyses uridine(54) in tRNA + (6R)-5,10-methylene-5,6,7,8-tetrahydrofolate + NADPH + H(+) = 5-methyluridine(54) in tRNA + (6S)-5,6,7,8-tetrahydrofolate + NADP(+). Its function is as follows. Catalyzes the folate-dependent formation of 5-methyl-uridine at position 54 (M-5-U54) in all tRNAs. The polypeptide is Methylenetetrahydrofolate--tRNA-(uracil-5-)-methyltransferase TrmFO (Bacillus cereus (strain AH820)).